We begin with the raw amino-acid sequence, 385 residues long: Rubredoxin-NAD(+) reductase (385 aa).

FAD-binding positions include 8–11 (AGTA), 32–33 (SR), Ile-79, Glu-156, Asp-275, and Ile-293.

The protein belongs to the FAD-dependent oxidoreductase family. Homodimer. It depends on FAD as a cofactor.

It is found in the cytoplasm. It carries out the reaction 2 reduced [rubredoxin] + NAD(+) + H(+) = 2 oxidized [rubredoxin] + NADH. It functions in the pathway hydrocarbon metabolism; alkane degradation. Its function is as follows. Involved in the hydrocarbon hydroxylating system, which transfers electrons from NADH to rubredoxin reductase and then through rubredoxin to alkane 1 monooxygenase. The polypeptide is Rubredoxin-NAD(+) reductase (alkT) (Ectopseudomonas oleovorans (Pseudomonas oleovorans)).